The primary structure comprises 447 residues: UDP-glycosyltransferase 79B9 (447 aa).

UDP-alpha-D-glucose is bound by residues serine 260, 319-321, 336-344, and 358-361; these read VQQ, HCGFGSMWE, and LCDQ.

Belongs to the UDP-glycosyltransferase family.

The protein is UDP-glycosyltransferase 79B9 (UGT79B9) of Arabidopsis thaliana (Mouse-ear cress).